A 185-amino-acid chain; its full sequence is Ribosome-recycling factor (185 aa).

It belongs to the RRF family.

The protein localises to the cytoplasm. In terms of biological role, responsible for the release of ribosomes from messenger RNA at the termination of protein biosynthesis. May increase the efficiency of translation by recycling ribosomes from one round of translation to another. The protein is Ribosome-recycling factor of Streptococcus thermophilus (strain ATCC BAA-491 / LMD-9).